Here is a 337-residue protein sequence, read N- to C-terminus: DNA-directed RNA polymerase subunit alpha (337 aa).

The segment at M1 to E233 is alpha N-terminal domain (alpha-NTD). An alpha C-terminal domain (alpha-CTD) region spans residues K265–F337.

It belongs to the RNA polymerase alpha chain family. As to quaternary structure, in plastids the minimal PEP RNA polymerase catalytic core is composed of four subunits: alpha, beta, beta', and beta''. When a (nuclear-encoded) sigma factor is associated with the core the holoenzyme is formed, which can initiate transcription.

It localises to the plastid. Its subcellular location is the chloroplast. It carries out the reaction RNA(n) + a ribonucleoside 5'-triphosphate = RNA(n+1) + diphosphate. Functionally, DNA-dependent RNA polymerase catalyzes the transcription of DNA into RNA using the four ribonucleoside triphosphates as substrates. In Solanum lycopersicum (Tomato), this protein is DNA-directed RNA polymerase subunit alpha.